A 505-amino-acid polypeptide reads, in one-letter code: L-arabinose isomerase (505 aa).

Residues Glu-308, Glu-335, His-352, and His-453 each coordinate Mn(2+).

This sequence belongs to the arabinose isomerase family. It depends on Mn(2+) as a cofactor.

It carries out the reaction beta-L-arabinopyranose = L-ribulose. It functions in the pathway carbohydrate degradation; L-arabinose degradation via L-ribulose; D-xylulose 5-phosphate from L-arabinose (bacterial route): step 1/3. Functionally, catalyzes the conversion of L-arabinose to L-ribulose. The polypeptide is L-arabinose isomerase (Bifidobacterium longum (strain DJO10A)).